The following is a 204-amino-acid chain: High mobility group-T protein (204 aa).

2 consecutive DNA-binding regions (HMG box) follow at residues 8–78 and 94–162; these read PRGK…RSYI and PKRP…TAYR. The disordered stretch occupies residues 162 to 204; it reads RNKGKVPVSMPAKAAAPAKDDDDDDDDDDDDEDDDDDDDEDDE. Residues 181–204 are compositionally biased toward acidic residues; it reads DDDDDDDDDDDDEDDDDDDDEDDE.

It belongs to the HMGB family.

Its subcellular location is the nucleus. The protein localises to the chromosome. Its function is as follows. Binds preferentially single-stranded DNA and unwinds double-stranded DNA. This Oncorhynchus mykiss (Rainbow trout) protein is High mobility group-T protein.